Reading from the N-terminus, the 130-residue chain is DNA-directed RNA polymerase subunit omega (130 aa).

Residues 109–130 (EEELLKGLEGLAPPEEQPEEDE) are disordered.

It belongs to the RNA polymerase subunit omega family. As to quaternary structure, the RNAP catalytic core consists of 2 alpha, 1 beta, 1 beta' and 1 omega subunit. When a sigma factor is associated with the core the holoenzyme is formed, which can initiate transcription.

The enzyme catalyses RNA(n) + a ribonucleoside 5'-triphosphate = RNA(n+1) + diphosphate. Promotes RNA polymerase assembly. Latches the N- and C-terminal regions of the beta' subunit thereby facilitating its interaction with the beta and alpha subunits. The chain is DNA-directed RNA polymerase subunit omega from Rhodopseudomonas palustris (strain BisB5).